Here is a 385-residue protein sequence, read N- to C-terminus: Homoserine O-succinyltransferase (385 aa).

The AB hydrolase-1 domain maps to 51 to 359 (NAILICHALS…EATEGHDAFL (309 aa)). Catalysis depends on Ser-157, which acts as the Nucleophile. Residue Arg-227 coordinates substrate. Residues Asp-322 and His-355 contribute to the active site. Asp-356 provides a ligand contact to substrate.

The protein belongs to the AB hydrolase superfamily. MetX family. Homodimer.

Its subcellular location is the cytoplasm. The enzyme catalyses L-homoserine + succinyl-CoA = O-succinyl-L-homoserine + CoA. Its pathway is amino-acid biosynthesis; L-methionine biosynthesis via de novo pathway; O-succinyl-L-homoserine from L-homoserine: step 1/1. In terms of biological role, transfers a succinyl group from succinyl-CoA to L-homoserine, forming succinyl-L-homoserine. In Marinomonas sp. (strain MWYL1), this protein is Homoserine O-succinyltransferase.